The primary structure comprises 67 residues: Alpha-conotoxin-like Qc1.1a (67 aa).

A signal peptide spans Met-1–Ser-21. Positions Phe-22–Arg-46 are excised as a propeptide. Disulfide bonds link Cys-49/Cys-55 and Cys-50/Cys-63. Residues Pro-51–Pro-53 form a lacks the Ser-Xaa-Pro motif that is crucial for potent interaction with nAChR region.

It belongs to the conotoxin A superfamily. As to expression, expressed by the venom duct.

The protein localises to the secreted. Alpha-conotoxins act on postsynaptic membranes, they bind to the nicotinic acetylcholine receptors (nAChR) and thus inhibit them. Has possibly a distinct nAChR binding mode from other alpha-conotoxins, due to a different three residue motif (lacks the Ser-Xaa-Pro motif). The sequence is that of Alpha-conotoxin-like Qc1.1a from Conus quercinus (Oak cone).